A 211-amino-acid chain; its full sequence is Uracil phosphoribosyltransferase (211 aa).

5-phospho-alpha-D-ribose 1-diphosphate contacts are provided by residues R78, R103, and 130 to 138; that span reads DPMLATGGT. Uracil is bound by residues I195 and 200–202; that span reads GDA. D201 is a 5-phospho-alpha-D-ribose 1-diphosphate binding site.

This sequence belongs to the UPRTase family. Requires Mg(2+) as cofactor.

The enzyme catalyses UMP + diphosphate = 5-phospho-alpha-D-ribose 1-diphosphate + uracil. The protein operates within pyrimidine metabolism; UMP biosynthesis via salvage pathway; UMP from uracil: step 1/1. With respect to regulation, allosterically activated by GTP. Its function is as follows. Catalyzes the conversion of uracil and 5-phospho-alpha-D-ribose 1-diphosphate (PRPP) to UMP and diphosphate. This Streptomyces coelicolor (strain ATCC BAA-471 / A3(2) / M145) protein is Uracil phosphoribosyltransferase.